A 240-amino-acid chain; its full sequence is Thiopurine S-methyltransferase (240 aa).

Residue 24-35 coordinates S-adenosyl-L-methionine; it reads WKEKWVTRHISF. S34 carries the phosphoserine modification. Substrate is bound at residue F35. K53 is modified (N6-acetyllysine). S-adenosyl-L-methionine contacts are provided by residues L64, E85, 129 to 130, and R147; that span reads SI.

It belongs to the class I-like SAM-binding methyltransferase superfamily. TPMT family. As to quaternary structure, monomer.

It localises to the cytoplasm. The catalysed reaction is S-adenosyl-L-methionine + a thiopurine = S-adenosyl-L-homocysteine + a thiopurine S-methylether.. It carries out the reaction mercaptopurine + S-adenosyl-L-methionine = 6-methylthiopurine + S-adenosyl-L-homocysteine + H(+). Its function is as follows. Catalyzes the S-methylation of thiopurine drugs such as 6-mercaptopurine (also called mercaptopurine, 6-MP or its brand name Purinethol) using S-adenosyl-L-methionine as the methyl donor. TPMT activity modulates the cytotoxic effects of thiopurine prodrugs. A natural substrate for this enzyme has yet to be identified. The chain is Thiopurine S-methyltransferase (Tpmt) from Mus musculus (Mouse).